Here is a 549-residue protein sequence, read N- to C-terminus: Pleckstrin homology domain-containing family A member 8 (549 aa).

Positions 1 to 93 constitute a PH domain; it reads MEGVLYKWTN…WLVALGTAKA (93 aa). Disordered regions lie at residues 180–245 and 257–312; these read NPDL…ENIS and QNDL…QEVQ. A compositionally biased stretch (basic and acidic residues) spans 203–219; sequence KSNDPKNLHPGETRKDL. The segment covering 276–288 has biased composition (acidic residues); that stretch reads EPVEEQQTDGSTE. Residues 299-309 are compositionally biased toward polar residues; sequence EVSMSPTQNKQ.

It localises to the cytoplasm. The protein localises to the golgi apparatus. The protein resides in the trans-Golgi network membrane. Its subcellular location is the membrane. In terms of biological role, cargo transport protein that is required for apical transport from the trans-Golgi network (TGN) to the plasma membrane. In Danio rerio (Zebrafish), this protein is Pleckstrin homology domain-containing family A member 8 (plekha8).